A 662-amino-acid chain; its full sequence is p-hydroxybenzoic acid efflux pump subunit AaeB (662 aa).

11 helical membrane-spanning segments follow: residues 22–42 (FAFKLSFAIVLSLFLGFHLQL), 52–72 (AAIVAAGPAFAAGGEPFSGAI), 76–96 (GMLRVVGTFIGCIGALIIIIA), 102–122 (VVMLMLCCIWAGLCTWVSSLV), 129–149 (VFGLAGYTTLIIIVSTQGTPL), 161–181 (EIVLGIVCAILADLLFSPRSI), 378–398 (LFWLSTGWTSGSVCMVMIAVV), 415–435 (FLFGTIYALPLGALMFMFIMP), 439–459 (QSMLLLCLSLGAMAFFLGLEV), 467–487 (LGALASTINILVLDNPMTFHI), and 491–511 (LDSAIGQIIGCFLALMVILLI).

Belongs to the aromatic acid exporter ArAE (TC 2.A.85) family.

The protein localises to the cell inner membrane. Functionally, forms an efflux pump with AaeA. Could function as a metabolic relief valve, allowing to eliminate certain compounds when they accumulate to high levels in the cell. The chain is p-hydroxybenzoic acid efflux pump subunit AaeB from Pectobacterium carotovorum subsp. carotovorum (strain PC1).